A 451-amino-acid chain; its full sequence is Tubulin alpha-1/alpha-2 chain (451 aa).

Gln-11 is a binding site for GTP. An N6-acetyllysine modification is found at Lys-40. GTP contacts are provided by Glu-71, Gly-144, Thr-145, Thr-179, Asn-206, and Asn-228. Glu-71 is a Mg(2+) binding site. Glu-254 is an active-site residue.

The protein belongs to the tubulin family. In terms of assembly, dimer of alpha and beta chains. A typical microtubule is a hollow water-filled tube with an outer diameter of 25 nm and an inner diameter of 15 nM. Alpha-beta heterodimers associate head-to-tail to form protofilaments running lengthwise along the microtubule wall with the beta-tubulin subunit facing the microtubule plus end conferring a structural polarity. Microtubules usually have 13 protofilaments but different protofilament numbers can be found in some organisms and specialized cells. Requires Mg(2+) as cofactor. Undergoes a tyrosination/detyrosination cycle, the cyclic removal and re-addition of a C-terminal tyrosine residue by the enzymes tubulin tyrosine carboxypeptidase (TTCP) and tubulin tyrosine ligase (TTL), respectively. Post-translationally, acetylation of alpha chains at Lys-40 stabilizes microtubules and affects affinity and processivity of microtubule motors. This modification has a role in multiple cellular functions, ranging from cell motility, cell cycle progression or cell differentiation to intracellular trafficking and signaling.

It is found in the cytoplasm. Its subcellular location is the cytoskeleton. It catalyses the reaction GTP + H2O = GDP + phosphate + H(+). In terms of biological role, tubulin is the major constituent of microtubules, a cylinder consisting of laterally associated linear protofilaments composed of alpha- and beta-tubulin heterodimers. Microtubules grow by the addition of GTP-tubulin dimers to the microtubule end, where a stabilizing cap forms. Below the cap, tubulin dimers are in GDP-bound state, owing to GTPase activity of alpha-tubulin. This is Tubulin alpha-1/alpha-2 chain (TUBA1) from Volvox carteri (Green alga).